The following is a 407-amino-acid chain: MEKALNITSEIGKLQTVLVKRPGSELENITPEYLESLLFDDIPYLKMMQKEHDFFVKRMQDSNIEVLYLEKLAAEALRKAGNKETFLTKMINESNQMDESALYVRDYLMSFNEEEMIRKLMAGLKKSEIPERKKKHLNEMMSEQYPFFLDPLPNLYFTRDPAAVIGSGVTINKMFQPARRRESIFIELILKHHPRFSNQEVPIWSGREEPFSLEGGDELVLNEETVIVGVSERTDARAVERLAESLFARAPKIKKVLAVEIPETRSFMHLDTVFTMVSDAQFTIHPAIQNQQGELNVYILEKGKNGLEITPRRDFRRVIAEVLEVPEVEFIPCGGEDVIVSAREQWNDGANTLAIAPGEVITYDRNQVSNDLLRRAGIKVHEVISSELSRGRGGPRCMTMPLVRENL.

C397 acts as the Amidino-cysteine intermediate in catalysis.

It belongs to the arginine deiminase family.

It localises to the cytoplasm. The catalysed reaction is L-arginine + H2O = L-citrulline + NH4(+). It functions in the pathway amino-acid degradation; L-arginine degradation via ADI pathway; carbamoyl phosphate from L-arginine: step 1/2. This chain is Arginine deiminase, found in Listeria welshimeri serovar 6b (strain ATCC 35897 / DSM 20650 / CCUG 15529 / CIP 8149 / NCTC 11857 / SLCC 5334 / V8).